Consider the following 559-residue polypeptide: 2-succinyl-5-enolpyruvyl-6-hydroxy-3-cyclohexene-1-carboxylate synthase (559 aa).

It belongs to the TPP enzyme family. MenD subfamily. As to quaternary structure, homodimer. It depends on Mg(2+) as a cofactor. The cofactor is Mn(2+). Thiamine diphosphate serves as cofactor.

The catalysed reaction is isochorismate + 2-oxoglutarate + H(+) = 5-enolpyruvoyl-6-hydroxy-2-succinyl-cyclohex-3-ene-1-carboxylate + CO2. Its pathway is quinol/quinone metabolism; 1,4-dihydroxy-2-naphthoate biosynthesis; 1,4-dihydroxy-2-naphthoate from chorismate: step 2/7. It participates in quinol/quinone metabolism; menaquinone biosynthesis. Catalyzes the thiamine diphosphate-dependent decarboxylation of 2-oxoglutarate and the subsequent addition of the resulting succinic semialdehyde-thiamine pyrophosphate anion to isochorismate to yield 2-succinyl-5-enolpyruvyl-6-hydroxy-3-cyclohexene-1-carboxylate (SEPHCHC). This Edwardsiella ictaluri (strain 93-146) protein is 2-succinyl-5-enolpyruvyl-6-hydroxy-3-cyclohexene-1-carboxylate synthase.